Here is a 333-residue protein sequence, read N- to C-terminus: Cell shape-determining protein Mbl (333 aa).

ATP-binding positions include 12–14 (TAN), 156–158 (GGT), 204–207 (EDIK), and 284–287 (GGAL).

Belongs to the FtsA/MreB family. As to quaternary structure, forms polymers.

Its subcellular location is the cytoplasm. Functionally, forms membrane-associated dynamic filaments that are essential for cell shape determination. Acts by regulating cell wall synthesis and cell elongation, and thus cell shape. A feedback loop between cell geometry and Mbl localization may maintain elongated cell shape by targeting cell wall growth to regions of negative cell wall curvature. This Bacillus cereus (strain ATCC 10987 / NRS 248) protein is Cell shape-determining protein Mbl.